We begin with the raw amino-acid sequence, 178 residues long: MTEIPSSFVLPDPEWIYRVGIGQDSHRFLPDEDPKPCILGGIIFENTPGFEANSDGDVVFHAICNAFSSVTHKGILGGLADELLKTKGITDSVVYLQEAVASLKPTQRVSHLAITIEGKRPKLLPQLPSMRKRIAEVLHIPLDSINITATSGEGLTAMGQGYGVQCFCVLTIMEYCRY.

Residues Asp24, His26, and His61 each coordinate a divalent metal cation. 24–26 lines the 4-CDP-2-C-methyl-D-erythritol 2-phosphate pocket; it reads DSH. 150 to 153 contributes to the 4-CDP-2-C-methyl-D-erythritol 2-phosphate binding site; it reads TSGE.

It belongs to the IspF family. Homotrimer. Requires a divalent metal cation as cofactor.

The catalysed reaction is 4-CDP-2-C-methyl-D-erythritol 2-phosphate = 2-C-methyl-D-erythritol 2,4-cyclic diphosphate + CMP. Its pathway is isoprenoid biosynthesis; isopentenyl diphosphate biosynthesis via DXP pathway; isopentenyl diphosphate from 1-deoxy-D-xylulose 5-phosphate: step 4/6. Its function is as follows. Involved in the biosynthesis of isopentenyl diphosphate (IPP) and dimethylallyl diphosphate (DMAPP), two major building blocks of isoprenoid compounds. Catalyzes the conversion of 4-diphosphocytidyl-2-C-methyl-D-erythritol 2-phosphate (CDP-ME2P) to 2-C-methyl-D-erythritol 2,4-cyclodiphosphate (ME-CPP) with a corresponding release of cytidine 5-monophosphate (CMP). The chain is 2-C-methyl-D-erythritol 2,4-cyclodiphosphate synthase from Chlamydia trachomatis serovar L2 (strain ATCC VR-902B / DSM 19102 / 434/Bu).